A 689-amino-acid polypeptide reads, in one-letter code: MFERNQKTIFVLDHTRYFSIASEEYISMDFLKGKPSADGGATGAAGNASGGGGSQFSKSLWTCACESSIEYCRVVWDLFPGKKHVRFIVSDTAAHIVNTWSPSTQNMSHVMNAMVMVGVPSRNVPTSSDYSVIHGLRAAIEALAEPTDEQLAAMADLGTDELPRIPNKGRVICITSARDNTSMKSLEDIFNTVLVQQNALAAPPAKKGLVIDHCHLVILNIVPLGVESLVTNRSLLKISPLLDVEIHTVSAPDISYKLTHLILNHYDLASTTVTNIPMKEEQNANSSANYDVEILHSRRAHSITCGPDFSLPTSIKQGATYETVTLKWCTPRGCGSADLQPCLGQFLVTPVDVTSRPSSCLINFLLNGRSVLLEMPRKTGSKATSHMLSARGGEIFVHSLCITRSCMDEAPSITDGPGGRVSDYRTAELGQLIKMSRMLPLKVKDPSAPPLTRRLPRYFPLTTSSSILFHLQRHISWLPHFLHLLVKEDMDKQDEVRCQQHIHELYKSASRGDVLPFTHTNGARLKLSKAKDQYRLLYRELEQLIQLNATTMHHKNLLESLQSLRAAYGDAPLKSEPGASLLRSYTESPLSPERLEPNSSGSASGSSNSNSLLKASKRRMSSCGQRSLLDIISSAERSQSNKRLDFSGRLCTPLGQVAKLYPDFGNKDKDTVASGASITPNVKEESVRS.

The stretch at 521-550 (NGARLKLSKAKDQYRLLYRELEQLIQLNAT) forms a coiled coil. Disordered regions lie at residues 578 to 619 (GASL…SKRR) and 662 to 689 (PDFG…SVRS). The segment covering 599-614 (SSGSASGSSNSNSLLK) has biased composition (low complexity). Residues 613 to 619 (LKASKRR) carry the Nuclear localization signal (NLS) motif.

This sequence belongs to the Integrator subunit 13 family. Belongs to the multiprotein complex Integrator, at least composed of IntS1, IntS2, IntS3, IntS4, omd/IntS5, IntS6, defl/IntS7, IntS8, IntS9, IntS10, IntS11, IntS12, asun/IntS13, IntS14 and IntS15. The core complex associates with protein phosphatase 2A subunits mts/PP2A and Pp2A-29B, to form the Integrator-PP2A (INTAC) complex. Phosphorylated.

It is found in the nucleus. It localises to the cytoplasm. Its subcellular location is the perinuclear region. In terms of biological role, component of the integrator complex, a multiprotein complex that terminates RNA polymerase II (Pol II) transcription in the promoter-proximal region of genes. The integrator complex provides a quality checkpoint during transcription elongation by driving premature transcription termination of transcripts that are unfavorably configured for transcriptional elongation: the complex terminates transcription by (1) catalyzing dephosphorylation of the C-terminal domain (CTD) of Pol II subunit Polr2A/Rbp1 and Spt5, and (2) degrading the exiting nascent RNA transcript via endonuclease activity. The integrator complex is also involved in the 3'-end processing of the U7 snRNA, and also the spliceosomal snRNAs U1, U2, U4 and U5. This Drosophila yakuba (Fruit fly) protein is Protein asunder (asun).